The primary structure comprises 511 residues: Bifunctional purine biosynthesis protein PurH (511 aa).

In terms of domain architecture, MGS-like spans 1–145 (MKKRALVSVS…KNHKFVSVIV (145 aa)).

Belongs to the PurH family.

The enzyme catalyses (6R)-10-formyltetrahydrofolate + 5-amino-1-(5-phospho-beta-D-ribosyl)imidazole-4-carboxamide = 5-formamido-1-(5-phospho-D-ribosyl)imidazole-4-carboxamide + (6S)-5,6,7,8-tetrahydrofolate. It carries out the reaction IMP + H2O = 5-formamido-1-(5-phospho-D-ribosyl)imidazole-4-carboxamide. The protein operates within purine metabolism; IMP biosynthesis via de novo pathway; 5-formamido-1-(5-phospho-D-ribosyl)imidazole-4-carboxamide from 5-amino-1-(5-phospho-D-ribosyl)imidazole-4-carboxamide (10-formyl THF route): step 1/1. It functions in the pathway purine metabolism; IMP biosynthesis via de novo pathway; IMP from 5-formamido-1-(5-phospho-D-ribosyl)imidazole-4-carboxamide: step 1/1. The chain is Bifunctional purine biosynthesis protein PurH from Bacillus cereus (strain ZK / E33L).